A 120-amino-acid polypeptide reads, in one-letter code: NAD(P)H-quinone oxidoreductase subunit 3, chloroplastic (120 aa).

Transmembrane regions (helical) follow at residues 9-29 (IFWA…IISG), 60-80 (ICYY…VFLY), and 88-108 (ILGV…IVGS).

The protein belongs to the complex I subunit 3 family. NDH is composed of at least 16 different subunits, 5 of which are encoded in the nucleus.

The protein resides in the plastid. Its subcellular location is the chloroplast thylakoid membrane. It carries out the reaction a plastoquinone + NADH + (n+1) H(+)(in) = a plastoquinol + NAD(+) + n H(+)(out). The catalysed reaction is a plastoquinone + NADPH + (n+1) H(+)(in) = a plastoquinol + NADP(+) + n H(+)(out). Functionally, NDH shuttles electrons from NAD(P)H:plastoquinone, via FMN and iron-sulfur (Fe-S) centers, to quinones in the photosynthetic chain and possibly in a chloroplast respiratory chain. The immediate electron acceptor for the enzyme in this species is believed to be plastoquinone. Couples the redox reaction to proton translocation, and thus conserves the redox energy in a proton gradient. The chain is NAD(P)H-quinone oxidoreductase subunit 3, chloroplastic from Morus indica (Mulberry).